Here is a 105-residue protein sequence, read N- to C-terminus: uncharacterized protein (105 aa).

This is an uncharacterized protein from Fowlpox virus (strain NVSL) (FPV).